The sequence spans 67 residues: Ayadualin (67 aa).

The first 20 residues, 1 to 20, serve as a signal peptide directing secretion; that stretch reads MNKIILFSAVFLALVFCAEA. Residues 35–54 are compositionally biased toward acidic residues; that stretch reads PDDTVDIDEGLPDAFDEDYE. A disordered region spans residues 35-67; sequence PDDTVDIDEGLPDAFDEDYEQDGHNPYPCRGDC. The short motif at 64-66 is the Integrin-binding motif element; it reads RGD.

In terms of tissue distribution, salivary gland.

The protein resides in the secreted. Its function is as follows. Inhibits collagen- and ADP-induced host platelet aggregation by blocking the binding of host integrin alpha-IIb/beta-3 (ITGA2B/ITGB3) to fibrinogen. Inhibits the intrinsic blood coagulation pathway in the host by blocking the activity of host coagulation factor XIIa (F12). The polypeptide is Ayadualin (Lutzomyia ayacuchensis (Sand fly)).